Reading from the N-terminus, the 37-residue chain is Large ribosomal subunit protein bL36c (37 aa).

The protein belongs to the bacterial ribosomal protein bL36 family.

It localises to the plastid. The protein localises to the chloroplast. This chain is Large ribosomal subunit protein bL36c, found in Liriodendron tulipifera (Tuliptree).